The primary structure comprises 279 residues: Zinc-finger homeodomain protein 1 (279 aa).

The segment covering 1 to 13 has biased composition (acidic residues); it reads MDFDDHDDGDEEM. A disordered region spans residues 1–47; it reads MDFDDHDDGDEEMPPMPVSSSYETPPQHGLAGGGMAPKPPGEIGSHV. The ZF-HD dimerization-type; degenerate zinc-finger motif lies at 57–106; the sequence is YRECLKNHAVGIGGHAVDGCGEFMAAGEEGTIDALRCAACNCHRNFHRKE. Positions 157-191 are disordered; the sequence is AAAAAAGGHPQRPLALPSTSHSGRDDGDDLSGMVG. Positions 215–278 form a DNA-binding region, homeobox; that stretch reads KKRFRTKFTQ…NNKHTLGKKL (64 aa).

Homo- and heterodimer with other ZFHD proteins.

The protein localises to the nucleus. In terms of biological role, putative transcription factor. The sequence is that of Zinc-finger homeodomain protein 1 (ZHD1) from Oryza sativa subsp. indica (Rice).